A 149-amino-acid chain; its full sequence is Large ribosomal subunit protein bL9 (149 aa).

Belongs to the bacterial ribosomal protein bL9 family.

Functionally, binds to the 23S rRNA. This is Large ribosomal subunit protein bL9 from Mannheimia succiniciproducens (strain KCTC 0769BP / MBEL55E).